The chain runs to 270 residues: uncharacterized protein (270 aa).

Positions 1-22 are cleaved as a signal peptide; that stretch reads MEYIKKIALYMSVLLLIIFIGG. C23 carries N-palmitoyl cysteine lipidation. C23 is lipidated: S-diacylglycerol cysteine.

This sequence belongs to the staphylococcal tandem lipoprotein family.

The protein resides in the cell membrane. This is an uncharacterized protein from Staphylococcus aureus (strain USA300).